Here is a 614-residue protein sequence, read N- to C-terminus: 4-hydroxy-3-methylbut-2-en-1-yl diphosphate synthase (flavodoxin) (614 aa).

C522, C525, C556, and E563 together coordinate [4Fe-4S] cluster.

This sequence belongs to the IspG family. Requires [4Fe-4S] cluster as cofactor.

The catalysed reaction is (2E)-4-hydroxy-3-methylbut-2-enyl diphosphate + oxidized [flavodoxin] + H2O + 2 H(+) = 2-C-methyl-D-erythritol 2,4-cyclic diphosphate + reduced [flavodoxin]. It participates in isoprenoid biosynthesis; isopentenyl diphosphate biosynthesis via DXP pathway; isopentenyl diphosphate from 1-deoxy-D-xylulose 5-phosphate: step 5/6. Converts 2C-methyl-D-erythritol 2,4-cyclodiphosphate (ME-2,4cPP) into 1-hydroxy-2-methyl-2-(E)-butenyl 4-diphosphate. This Phocaeicola vulgatus (strain ATCC 8482 / DSM 1447 / JCM 5826 / CCUG 4940 / NBRC 14291 / NCTC 11154) (Bacteroides vulgatus) protein is 4-hydroxy-3-methylbut-2-en-1-yl diphosphate synthase (flavodoxin).